Reading from the N-terminus, the 344-residue chain is MVKLVLKGNNLSKLIKMSVHREKIDLAKLPHHYDGPVTLAVIGGTGLYDLPNLHPVARLTISTPWGFPSGSITISKTDSGFPVAFLARHGAHHDLLPSDVPSRANIAALKRLGVKAIIAFSAVGSLQQEIKPRDFVLPTQIIDRTKGIRPSTFFEKGFVAHAMFGEPFDLKLNKLISDAIPSKGFLEGFDTDGTPVLHTKENTNNGEDLTIICMEGPQFSTRAESRLYRSWGGSVINMSVLPEAKLAREAEIAYQMICMSTDYDSWNESEEPVTVETVVGNLKANSANACKLAAKLIDEFAAKGGEIGKDLQGSMKYAVSTSPHGVKKELLEKMHFLFPGYWEV.

Residues threonine 45, 88-89 (RH), and 121-122 (SA) each bind phosphate. Position 238 (methionine 238) interacts with substrate. Position 239 (serine 239) interacts with phosphate. A substrate-binding site is contributed by 262 to 264 (DYD).

This sequence belongs to the PNP/MTAP phosphorylase family. MTAP subfamily. Homotrimer.

The protein localises to the cytoplasm. It localises to the nucleus. It catalyses the reaction S-methyl-5'-thioadenosine + phosphate = 5-(methylsulfanyl)-alpha-D-ribose 1-phosphate + adenine. It functions in the pathway amino-acid biosynthesis; L-methionine biosynthesis via salvage pathway; S-methyl-5-thio-alpha-D-ribose 1-phosphate from S-methyl-5'-thioadenosine (phosphorylase route): step 1/1. Functionally, catalyzes the reversible phosphorylation of S-methyl-5'-thioadenosine (MTA) to adenine and 5-methylthioribose-1-phosphate. Involved in the breakdown of MTA, a major by-product of polyamine biosynthesis. Responsible for the first step in the methionine salvage pathway after MTA has been generated from S-adenosylmethionine. Has broad substrate specificity with 6-aminopurine nucleosides as preferred substrates. This Candida albicans (strain SC5314 / ATCC MYA-2876) (Yeast) protein is S-methyl-5'-thioadenosine phosphorylase.